Reading from the N-terminus, the 416-residue chain is MKEIEYVKELSYRAKKASRTLKSLSSFQKNKVLLELANLLEKRKSEILSANEFDLKNGKEKNLPSALMDRLLLNEKRIDSMAFAVREIVSLPDPVGEVTRGLTLPNGLELVTKRVPLGVVMVIYESRPNVTIDVGALSFKSGNACILRGGSEAFHSNEILVKLFHEILNKEGIDTSAITFVDKTDRSFMLPFLQQTPSIDVVVPRGGEGLIKFISEHSMIPVVKHDKGVCNLYIDQDADPAKVIPIVINSKVQRPGVCNATENLILHNGYPFRKELLEALAKEGVELLLDPSALSLYPKGRPVKEEDYQEEFLDLRLSVKTVSSLEEALTFIERTSSGHTEAIITEDLNAAKMFTNSLDSAALFVNCSTRFHDGAEFGLGAEVGISTGKLHVRGPMGLVHLTTTTTYVTGNGQIRN.

Belongs to the gamma-glutamyl phosphate reductase family.

Its subcellular location is the cytoplasm. It catalyses the reaction L-glutamate 5-semialdehyde + phosphate + NADP(+) = L-glutamyl 5-phosphate + NADPH + H(+). The protein operates within amino-acid biosynthesis; L-proline biosynthesis; L-glutamate 5-semialdehyde from L-glutamate: step 2/2. Catalyzes the NADPH-dependent reduction of L-glutamate 5-phosphate into L-glutamate 5-semialdehyde and phosphate. The product spontaneously undergoes cyclization to form 1-pyrroline-5-carboxylate. This is Gamma-glutamyl phosphate reductase from Leptospira borgpetersenii serovar Hardjo-bovis (strain JB197).